We begin with the raw amino-acid sequence, 321 residues long: ATP-dependent 6-phosphofructokinase (321 aa).

ATP is bound at residue Gly-10. Arg-20–Arg-24 provides a ligand contact to ADP. ATP-binding positions include Arg-71 to Asp-72 and Gly-101 to Thr-104. Residue Glu-102 coordinates Mg(2+). Residue Thr-125 to Asp-127 coordinates substrate. Residue Asp-127 is the Proton acceptor of the active site. Arg-154 contributes to the ADP binding site. Substrate is bound by residues Arg-162 and Met-169–Arg-171. ADP contacts are provided by residues Gly-185–Glu-187 and Lys-213–His-215. Substrate is bound by residues Glu-222, Arg-246, and His-252 to Arg-255.

Belongs to the phosphofructokinase type A (PFKA) family. ATP-dependent PFK group I subfamily. Prokaryotic clade 'B1' sub-subfamily. Homotetramer. Mg(2+) serves as cofactor.

It is found in the cytoplasm. It carries out the reaction beta-D-fructose 6-phosphate + ATP = beta-D-fructose 1,6-bisphosphate + ADP + H(+). It functions in the pathway carbohydrate degradation; glycolysis; D-glyceraldehyde 3-phosphate and glycerone phosphate from D-glucose: step 3/4. With respect to regulation, allosterically activated by ADP and other diphosphonucleosides, and allosterically inhibited by phosphoenolpyruvate. Catalyzes the phosphorylation of D-fructose 6-phosphate to fructose 1,6-bisphosphate by ATP, the first committing step of glycolysis. This is ATP-dependent 6-phosphofructokinase from Aquifex aeolicus (strain VF5).